Reading from the N-terminus, the 224-residue chain is Protein FAM3D (224 aa).

A signal peptide spans 1-25 (MRVSGVLRLLALIFAIVTTWMFIRS). 2 disulfide bridges follow: Cys55–Cys83 and Cys61–Cys218. Residues 64–222 (NYFAFKICSG…LEMEGCMPPK (159 aa)) enclose the GG-type lectin domain. Asn107 carries an N-linked (GlcNAc...) asparagine glycan.

The protein belongs to the FAM3 family. As to expression, abundantly expressed in placenta and weakly expressed in small intestine.

It localises to the secreted. The chain is Protein FAM3D (FAM3D) from Homo sapiens (Human).